We begin with the raw amino-acid sequence, 1001 residues long: Serine/threonine-protein kinase TAO1 (1001 aa).

At Ser9 the chain carries Phosphoserine. Positions 28–281 (FTDLREIGHG…SEELLKHMFV (254 aa)) constitute a Protein kinase domain. ATP contacts are provided by residues 34–42 (IGHGSFGAV) and Lys57. The Proton acceptor role is filled by Asp151. Disordered regions lie at residues 324–380 (PAVE…DKSE) and 404–431 (ENYQ…HKSH). Over residues 350-370 (SNQSIPSMSISASSQSSSVNS) the composition is skewed to low complexity. Ser421 and Ser445 each carry phosphoserine. Residues 458-651 (SELREQMSGY…QTQKDLEHAM (194 aa)) adopt a coiled-coil conformation. The interval 567-587 (KEELNENQSTPKKEKQEWLSK) is disordered. Over residues 577–587 (PKKEKQEWLSK) the composition is skewed to basic and acidic residues. Residue Thr669 is modified to Phosphothreonine. Residues 754–877 (KAVLKRLKEE…LERQAREIEA (124 aa)) adopt a coiled-coil conformation. Residues 905–1001 (PGASSWSHNP…ISNGSHMSYT (97 aa)) form a disordered region. Over residues 906–915 (GASSWSHNPT) the composition is skewed to polar residues. Residue Ser965 is modified to Phosphoserine. The segment covering 975–1001 (GGRTEQGMSRSTSVTSQISNGSHMSYT) has biased composition (polar residues).

Belongs to the protein kinase superfamily. STE Ser/Thr protein kinase family. STE20 subfamily. Self-associates. Interacts with MAP2K3. Interacts with SPRED1. Interacts with TESK1; the interaction inhibits TAOK1 kinase activity. Interacts with MAP3K7. Post-translationally, proteolytically processed by caspase-3 (CASP3). Autophosphorylated. Phosphorylated by ATM in response to DNA damage. Phosphorylated by LRRK2.

The protein localises to the cytoplasm. The catalysed reaction is L-seryl-[protein] + ATP = O-phospho-L-seryl-[protein] + ADP + H(+). The enzyme catalyses L-threonyl-[protein] + ATP = O-phospho-L-threonyl-[protein] + ADP + H(+). Serine/threonine-protein kinase activity is inhibited by SPRED1. Its function is as follows. Serine/threonine-protein kinase involved in various processes such as p38/MAPK14 stress-activated MAPK cascade, DNA damage response and regulation of cytoskeleton stability. Phosphorylates MAP2K3, MAP2K6 and MARK2. Acts as an activator of the p38/MAPK14 stress-activated MAPK cascade by mediating phosphorylation and subsequent activation of the upstream MAP2K3 and MAP2K6 kinases. Involved in G-protein coupled receptor signaling to p38/MAPK14. In response to DNA damage, involved in the G2/M transition DNA damage checkpoint by activating the p38/MAPK14 stress-activated MAPK cascade, probably by mediating phosphorylation of MAP2K3 and MAP2K6. Acts as a regulator of cytoskeleton stability by phosphorylating 'Thr-208' of MARK2, leading to activate MARK2 kinase activity and subsequent phosphorylation and detachment of MAPT/TAU from microtubules. Also acts as a regulator of apoptosis: regulates apoptotic morphological changes, including cell contraction, membrane blebbing and apoptotic bodies formation via activation of the MAPK8/JNK cascade. During fetal development, it plays an essential role in the regulation of neuronal differentiation and migration to the cortical plate. The protein is Serine/threonine-protein kinase TAO1 (Taok1) of Rattus norvegicus (Rat).